A 610-amino-acid chain; its full sequence is Elongation factor 4 (610 aa).

In terms of domain architecture, tr-type G spans 11–193 (EKIRNFSIIA…QIVEKVPAPT (183 aa)). Residues 23–28 (DHGKST) and 140–143 (NKID) each bind GTP.

It belongs to the TRAFAC class translation factor GTPase superfamily. Classic translation factor GTPase family. LepA subfamily.

It localises to the cell membrane. The enzyme catalyses GTP + H2O = GDP + phosphate + H(+). In terms of biological role, required for accurate and efficient protein synthesis under certain stress conditions. May act as a fidelity factor of the translation reaction, by catalyzing a one-codon backward translocation of tRNAs on improperly translocated ribosomes. Back-translocation proceeds from a post-translocation (POST) complex to a pre-translocation (PRE) complex, thus giving elongation factor G a second chance to translocate the tRNAs correctly. Binds to ribosomes in a GTP-dependent manner. This is Elongation factor 4 from Streptococcus pyogenes serotype M12 (strain MGAS9429).